A 474-amino-acid chain; its full sequence is Synaptotagmin-15B (474 aa).

Disordered regions lie at residues 1-62 and 75-128; these read MGVV…AASG and PRAA…PPAV. The segment covering 75–88 has biased composition (low complexity); the sequence is PRAAAGHQQHHGPP. C2 domains lie at 200–317 and 331–452; these read CLGR…RRVI and EFGD…EHWD.

Belongs to the synaptotagmin family.

This chain is Synaptotagmin-15B, found in Homo sapiens (Human).